The primary structure comprises 367 residues: tRNA-specific 2-thiouridylase MnmA (367 aa).

ATP contacts are provided by residues 9–16 and phenylalanine 35; that span reads LMSGGVDS. Cysteine 107 functions as the Nucleophile in the catalytic mechanism. Cysteines 107 and 205 form a disulfide. Glycine 131 serves as a coordination point for ATP. The tract at residues 155–157 is interaction with tRNA; sequence KDQ. The active-site Cysteine persulfide intermediate is cysteine 205.

Belongs to the MnmA/TRMU family.

It localises to the cytoplasm. The catalysed reaction is S-sulfanyl-L-cysteinyl-[protein] + uridine(34) in tRNA + AH2 + ATP = 2-thiouridine(34) in tRNA + L-cysteinyl-[protein] + A + AMP + diphosphate + H(+). Catalyzes the 2-thiolation of uridine at the wobble position (U34) of tRNA, leading to the formation of s(2)U34. The protein is tRNA-specific 2-thiouridylase MnmA of Petrotoga mobilis (strain DSM 10674 / SJ95).